A 145-amino-acid chain; its full sequence is MKLNTKHHGTIDYEEKDIINFKRGLPGFEHLKKFIVYSIEENNIFSVLQSLEEENIGIPVLSPFTICSDYEVKLTEEQIKNLKIKSEEEVWVLNTVTINSDYKEITTNLRAPIIINIKERIGEQIILKNEEYKIKYPIFQEENKC.

The protein belongs to the FliW family. In terms of assembly, interacts with translational regulator CsrA and flagellin(s).

It localises to the cytoplasm. Its function is as follows. Acts as an anti-CsrA protein, binds CsrA and prevents it from repressing translation of its target genes, one of which is flagellin. Binds to flagellin and participates in the assembly of the flagellum. This chain is Flagellar assembly factor FliW, found in Clostridium tetani (strain Massachusetts / E88).